We begin with the raw amino-acid sequence, 697 residues long: ATP-dependent zinc metalloprotease FtsH (697 aa).

Residues 1–23 form a disordered region; that stretch reads MSQNERDSLELERKNTPPDGPRL. Residues 1–29 lie on the Cytoplasmic side of the membrane; that stretch reads MSQNERDSLELERKNTPPDGPRLPERRPR. Residues 30 to 50 traverse the membrane as a helical segment; sequence FSVWIYLAIFLALLVHFFLFW. Residues 51-158 lie on the Periplasmic side of the membrane; the sequence is TGTDTSTIEY…QFTARIEENW (108 aa). The chain crosses the membrane as a helical span at residues 159-179; the sequence is FGGLLTWIFPLILIVALWVFL. At 180 to 697 the chain is on the cytoplasmic side; the sequence is LRRMSPSSQV…TERPESSSAP (518 aa). 251 to 258 serves as a coordination point for ATP; that stretch reads GPPGTGKT. Zn(2+) is bound at residue H474. The active site involves E475. Zn(2+)-binding residues include H478 and D550. Residues 649–697 form a disordered region; sequence GPRPYGDYPSPNGKDVEELKDLQKGEPTSSSAVEAPAPQTERPESSSAP. Basic and acidic residues predominate over residues 662–672; the sequence is KDVEELKDLQK.

The protein in the central section; belongs to the AAA ATPase family. In the C-terminal section; belongs to the peptidase M41 family. In terms of assembly, homohexamer. Zn(2+) is required as a cofactor.

It is found in the cell inner membrane. Functionally, acts as a processive, ATP-dependent zinc metallopeptidase for both cytoplasmic and membrane proteins. Plays a role in the quality control of integral membrane proteins. In Rhodothermus marinus (strain ATCC 43812 / DSM 4252 / R-10) (Rhodothermus obamensis), this protein is ATP-dependent zinc metalloprotease FtsH.